Here is a 149-residue protein sequence, read N- to C-terminus: Hut operon positive regulatory protein (149 aa).

It belongs to the HutP family. In terms of assembly, homohexamer.

Functionally, antiterminator that binds to cis-acting regulatory sequences on the mRNA in the presence of histidine, thereby suppressing transcription termination and activating the hut operon for histidine utilization. This chain is Hut operon positive regulatory protein, found in Geobacillus sp. (strain WCH70).